The chain runs to 234 residues: MASKVLKGIRAIAFDLDGTLVDSAGGLADALDQALLAKGLPAAGKERVAAWVGNGADIMVERALTWARTKLTAQLHKETRELFDRFYETTVTTGSQLFPEVKVTLAELAKHNLPMGIITNKPTPFIAPLLASLDISEYFSLVLGGDDVKEKKPHPAPIYLTMGTFGLRKEELLFVGDSRNDILAAQAAGCPCVGLTYGYNYGESIALSNPDCILTNFSDLLSTIGLPSLKLQEA.

Residue Asp-15 is the Nucleophile of the active site. Residues Asp-15, Asp-17, and Asp-177 each coordinate Mg(2+).

This sequence belongs to the HAD-like hydrolase superfamily. CbbY/CbbZ/Gph/YieH family. As to quaternary structure, monomer. Mg(2+) serves as cofactor. Chloride is required as a cofactor.

The catalysed reaction is 2-phosphoglycolate + H2O = glycolate + phosphate. It participates in organic acid metabolism; glycolate biosynthesis; glycolate from 2-phosphoglycolate: step 1/1. In terms of biological role, specifically catalyzes the dephosphorylation of 2-phosphoglycolate. Is involved in the dissimilation of the intracellular 2-phosphoglycolate formed during the DNA repair of 3'-phosphoglycolate ends, a major class of DNA lesions induced by oxidative stress. The polypeptide is Phosphoglycolate phosphatase (Photorhabdus laumondii subsp. laumondii (strain DSM 15139 / CIP 105565 / TT01) (Photorhabdus luminescens subsp. laumondii)).